The primary structure comprises 599 residues: DNA primase (599 aa).

Residues 38–62 form a CHC2-type zinc finger; sequence CPFHDEKTPSFTVSEDKQICHCFGC. The Toprim domain occupies 260–341; that stretch reads DEIVLLEGFM…NVFVIQLPSG (82 aa). Residues Glu266, Asp310, and Asp312 each coordinate Mg(2+).

This sequence belongs to the DnaG primase family. Monomer. Interacts with DnaB. Requires Zn(2+) as cofactor. Mg(2+) is required as a cofactor.

It catalyses the reaction ssDNA + n NTP = ssDNA/pppN(pN)n-1 hybrid + (n-1) diphosphate.. RNA polymerase that catalyzes the synthesis of short RNA molecules used as primers for DNA polymerase during DNA replication. The protein is DNA primase of Staphylococcus aureus (strain COL).